Consider the following 289-residue polypeptide: Ribosomal RNA small subunit methyltransferase A (289 aa).

The S-adenosyl-L-methionine site is built by Asn28, Leu30, Gly55, Glu77, Asp103, and Asn122.

Belongs to the class I-like SAM-binding methyltransferase superfamily. rRNA adenine N(6)-methyltransferase family. RsmA subfamily.

The protein localises to the cytoplasm. The enzyme catalyses adenosine(1518)/adenosine(1519) in 16S rRNA + 4 S-adenosyl-L-methionine = N(6)-dimethyladenosine(1518)/N(6)-dimethyladenosine(1519) in 16S rRNA + 4 S-adenosyl-L-homocysteine + 4 H(+). Specifically dimethylates two adjacent adenosines (A1518 and A1519) in the loop of a conserved hairpin near the 3'-end of 16S rRNA in the 30S particle. May play a critical role in biogenesis of 30S subunits. This Jannaschia sp. (strain CCS1) protein is Ribosomal RNA small subunit methyltransferase A.